Here is a 327-residue protein sequence, read N- to C-terminus: L-serine dehydratase/L-threonine deaminase (327 aa).

Position 41 is an N6-(pyridoxal phosphate)lysine (Lys-41).

It belongs to the serine/threonine dehydratase family. Homodimer. It depends on pyridoxal 5'-phosphate as a cofactor.

The protein localises to the cytoplasm. It catalyses the reaction L-serine = pyruvate + NH4(+). It carries out the reaction L-threonine = 2-oxobutanoate + NH4(+). It functions in the pathway carbohydrate biosynthesis; gluconeogenesis. Its function is as follows. Catalyzes the pyridoxal-phosphate-dependent dehydrative deamination of L-threonine and L-serine to ammonia and alpha-ketobutyrate and pyruvate, respectively. This is L-serine dehydratase/L-threonine deaminase (SDS) from Bos taurus (Bovine).